Consider the following 64-residue polypeptide: Small ribosomal subunit protein eS17 (64 aa).

The protein belongs to the eukaryotic ribosomal protein eS17 family.

The polypeptide is Small ribosomal subunit protein eS17 (Methanospirillum hungatei JF-1 (strain ATCC 27890 / DSM 864 / NBRC 100397 / JF-1)).